The primary structure comprises 88 residues: UPF0297 protein str1959 (88 aa).

Belongs to the UPF0297 family.

This is UPF0297 protein str1959 from Streptococcus thermophilus (strain CNRZ 1066).